Consider the following 160-residue polypeptide: Serine-protein kinase RsbW (160 aa).

Belongs to the anti-sigma-factor family.

It catalyses the reaction L-seryl-[protein] + ATP = O-phospho-L-seryl-[protein] + ADP + H(+). The enzyme catalyses L-threonyl-[protein] + ATP = O-phospho-L-threonyl-[protein] + ADP + H(+). Its function is as follows. Negative regulator of sigma-B activity. Phosphorylates and inactivates its specific antagonist protein, RsbV. Upon phosphorylation of RsbV, RsbW is released and binds to sigma-B, thereby blocking its ability to form an RNA polymerase holoenzyme (E-sigma-B). The polypeptide is Serine-protein kinase RsbW (Bacillus thuringiensis (strain Al Hakam)).